A 193-amino-acid polypeptide reads, in one-letter code: Dephospho-CoA kinase (193 aa).

Positions 5 to 193 constitute a DPCK domain; sequence IIGLTGGIAS…KKVERFCETI (189 aa). ATP is bound at residue 13–18; it reads ASGKST.

Belongs to the CoaE family.

The protein localises to the cytoplasm. It carries out the reaction 3'-dephospho-CoA + ATP = ADP + CoA + H(+). Its pathway is cofactor biosynthesis; coenzyme A biosynthesis; CoA from (R)-pantothenate: step 5/5. Its function is as follows. Catalyzes the phosphorylation of the 3'-hydroxyl group of dephosphocoenzyme A to form coenzyme A. The chain is Dephospho-CoA kinase from Fusobacterium nucleatum subsp. nucleatum (strain ATCC 25586 / DSM 15643 / BCRC 10681 / CIP 101130 / JCM 8532 / KCTC 2640 / LMG 13131 / VPI 4355).